Consider the following 323-residue polypeptide: Protein SopB (323 aa).

Residues 1-20 (MKRAPVIPKHTLNTQPVEDT) are disordered. Residues 11–20 (TLNTQPVEDT) show a composition bias toward polar residues. Positions 180 to 199 (SALADAENISRKIITRCINT) form a DNA-binding region, H-T-H motif.

It belongs to the ParB family.

Functionally, control of plasmid partitioning; required to recognize the cis-acting. Binds specifically with the DNA segment containing the sopC region. SopB is trans-acting. The protein is Protein SopB (sopB) of Escherichia coli O157:H7.